Reading from the N-terminus, the 993-residue chain is UPF0182 protein ROP_64500 (993 aa).

7 helical membrane passes run 18 to 38 (VLLV…RLIS), 63 to 83 (LLLF…ALLL), 114 to 134 (LFGL…AQSS), 174 to 194 (WLFV…YIFG), 211 to 231 (VQLA…YWFD), 260 to 280 (KLIL…AIFL), and 288 to 308 (MATA…PLVV). The disordered stretch occupies residues 904-948 (TGSVATAPSAEEGTPPETGTTPPVEQGAAPPAPTAPATPPSGTDV). Over residues 908–926 (ATAPSAEEGTPPETGTTPP) the composition is skewed to low complexity. Pro residues predominate over residues 933 to 942 (PPAPTAPATP).

The protein belongs to the UPF0182 family.

The protein localises to the cell membrane. This chain is UPF0182 protein ROP_64500, found in Rhodococcus opacus (strain B4).